A 1133-amino-acid polypeptide reads, in one-letter code: Fas-binding factor 1 (1133 aa).

Disordered stretches follow at residues 89-198 (LGLK…TPIR) and 211-544 (IMAT…VPVQ). Residues 102-113 (AAKDPGKGELPN) show a composition bias toward basic and acidic residues. Residues 125–134 (KKSLPSPSSS) show a composition bias toward low complexity. At S142 the chain carries Phosphoserine. The segment covering 165–182 (PPVTQSKTASDKSPSTVR) has biased composition (polar residues). 2 stretches are compositionally biased toward basic and acidic residues: residues 221–245 (PKAE…DELL) and 259–276 (TGEH…RPQD). Positions 277-286 (SEDMWGDEDF) are enriched in acidic residues. Residues 295-310 (VVSSEGRQSRRQSVSR) are compositionally biased toward low complexity. Over residues 325-336 (SKQSPPMASSPI) the composition is skewed to polar residues. Basic and acidic residues predominate over residues 415–424 (ASKEEKEDWL). The span at 459–469 (SGSQPLTSTQG) shows a compositional bias: polar residues. The span at 473–482 (AAAGGSSGTT) shows a compositional bias: low complexity. Coiled coils occupy residues 577 to 727 (AELQ…VDAA) and 773 to 870 (IRQR…EEQK). Residue K960 forms a Glycyl lysine isopeptide (Lys-Gly) (interchain with G-Cter in SUMO2) linkage. Residues 1062 to 1085 (AASSQSALMPPAPTTRWCSQPPTG) form a disordered region.

In terms of assembly, may interact with FAS cytoplasmic domain. Interacts with PARD3. Interacts with TRAPPC14. Present in various epithelial cells (at protein level).

The protein localises to the cytoplasm. It localises to the cytoskeleton. The protein resides in the microtubule organizing center. Its subcellular location is the centrosome. It is found in the centriole. The protein localises to the spindle pole. It localises to the cell junction. In terms of biological role, keratin-binding protein required for epithelial cell polarization. Involved in apical junction complex (AJC) assembly via its interaction with PARD3. Required for ciliogenesis. This Homo sapiens (Human) protein is Fas-binding factor 1 (FBF1).